Reading from the N-terminus, the 871-residue chain is Zinc finger protein 473 (871 aa).

Residues 6–75 (VTLKDVGMDF…AGGSPEATSP (70 aa)) enclose the KRAB domain. Disordered stretches follow at residues 47 to 81 (PPRP…TETK) and 140 to 164 (NGES…TVST). The span at 71-81 (EATSPDVTETK) shows a compositional bias: polar residues. The segment covering 145-154 (TECKSHELKR) has biased composition (basic and acidic residues). Lysine 148 is covalently cross-linked (Glycyl lysine isopeptide (Lys-Gly) (interchain with G-Cter in SUMO2)). A C2H2-type 1 zinc finger spans residues 209–231 (YQCSECGKSFSGSYRLTQHWITH). The C2H2-type 2; degenerate zinc finger occupies 265-286 (YVCNEYGTTFSQSTYLWHQKTH). Over residues 290 to 317 (KPCKSQDSDHPPSHDTQPGEHQKTHTDS) the composition is skewed to basic and acidic residues. The disordered stretch occupies residues 290-318 (KPCKSQDSDHPPSHDTQPGEHQKTHTDSK). Residues 312 to 552 (KTHTDSKSYN…GFFVSGKILD (241 aa)) are interaction with SLBP/pre-mRNA complex. C2H2-type zinc fingers lie at residues 320–342 (YNCN…QKIH), 347–369 (YECS…QKTH), and 375–397 (SECQ…QALH). The segment at 403-425 (YKCNERGKSFRHNSTLKIHQRVH) adopts a C2H2-type 6; degenerate zinc-finger fold. A Glycyl lysine isopeptide (Lys-Gly) (interchain with G-Cter in SUMO2) cross-link involves residue lysine 419. 4 C2H2-type zinc fingers span residues 431 to 453 (YKCS…RRIH), 459 to 481 (HKCQ…QAIH), 487 to 509 (YSCA…QKMH), and 515 to 537 (YECQ…ESVH). Glycyl lysine isopeptide (Lys-Gly) (interchain with G-Cter in SUMO2) cross-links involve residues lysine 549 and lysine 558. 2 C2H2-type zinc fingers span residues 562–584 (FKCN…ERIH) and 591–613 (FECD…QRIH). A Glycyl lysine isopeptide (Lys-Gly) (interchain with G-Cter in SUMO2) cross-link involves residue lysine 635. C2H2-type zinc fingers lie at residues 646-668 (FKCN…QLIH), 674-696 (FKCS…ERTH), 702-724 (LVCN…QRIH), 730-752 (YVCD…QRIH), 758-780 (YVCQ…RRVH), 786-808 (YRCG…QRIH), 814-836 (YSCN…LRVH), and 842-864 (YQCQ…QRVH).

It belongs to the krueppel C2H2-type zinc-finger protein family. As to quaternary structure, interacts with the SLBP/pre-mRNA complex but not with SLBP alone. Interacts with LSM11 in a U7 snRNP-dependent manner.

The protein localises to the nucleus. Involved in histone 3'-end pre-mRNA processing by associating with U7 snRNP and interacting with SLBP/pre-mRNA complex. Increases histone 3'-end pre-mRNA processing but has no effect on U7 snRNP levels, when overexpressed. Required for cell cycle progression from G1 to S phases. The protein is Zinc finger protein 473 (ZNF473) of Homo sapiens (Human).